The chain runs to 532 residues: ATP-dependent RNA helicase DBP3 (532 aa).

The tract at residues 1-78 (MGKRDRTEDD…EVAEEKPKMT (78 aa)) is disordered. The span at 15–58 (KKVKLDKKDKKEKKEKKDKKDKKDKKDKKDKKDKKEKKEKKEKK) shows a compositional bias: basic residues. The short motif at 126–152 (MEFSHVTLDPRITKVLTKFPRPTPIQA) is the Q motif element. In terms of domain architecture, Helicase ATP-binding spans 155-327 (WPYLLAGKDM…EGFMKTPTKV (173 aa)). Residue 168-175 (AETGSGKT) participates in ATP binding. The DEAD box signature appears at 274 to 277 (DEAD). The Helicase C-terminal domain maps to 356–502 (RLLDLLRQYA…PVPDELLKFG (147 aa)).

The protein belongs to the DEAD box helicase family. DDX5/DBP2 subfamily.

The protein localises to the nucleus. It is found in the nucleolus. The catalysed reaction is ATP + H2O = ADP + phosphate + H(+). Its function is as follows. ATP-dependent RNA helicase required for 60S ribosomal subunit synthesis. Involved in efficient pre-rRNA processing, predominantly at site A3, which is necessary for the normal formation of 25S and 5.8S rRNAs. This chain is ATP-dependent RNA helicase DBP3 (DBP3), found in Yarrowia lipolytica (strain CLIB 122 / E 150) (Yeast).